A 152-amino-acid chain; its full sequence is Sec-independent protein translocase protein TatB (152 aa).

The helical transmembrane segment at 1 to 21 threads the bilayer; sequence MFGISFSELLLVGLVALLVLG. The segment covering 98–115 has biased composition (low complexity); the sequence is HAPGAATVAEAPPASEVP. Residues 98-152 are disordered; it reads HAPGAATVAEAPPASEVPAPLPSTPAPAPTAEPAAPVATPATTAPHDSTLPPRAP. Pro residues predominate over residues 116-127; that stretch reads APLPSTPAPAPT. The segment covering 128–142 has biased composition (low complexity); sequence AEPAAPVATPATTAP.

It belongs to the TatB family. In terms of assembly, the Tat system comprises two distinct complexes: a TatABC complex, containing multiple copies of TatA, TatB and TatC subunits, and a separate TatA complex, containing only TatA subunits. Substrates initially bind to the TatABC complex, which probably triggers association of the separate TatA complex to form the active translocon.

It is found in the cell inner membrane. Its function is as follows. Part of the twin-arginine translocation (Tat) system that transports large folded proteins containing a characteristic twin-arginine motif in their signal peptide across membranes. Together with TatC, TatB is part of a receptor directly interacting with Tat signal peptides. TatB may form an oligomeric binding site that transiently accommodates folded Tat precursor proteins before their translocation. This Pseudomonas fluorescens (strain ATCC BAA-477 / NRRL B-23932 / Pf-5) protein is Sec-independent protein translocase protein TatB.